The sequence spans 244 residues: 1-(5-phosphoribosyl)-5-[(5-phosphoribosylamino)methylideneamino] imidazole-4-carboxamide isomerase (244 aa).

Residue Asp10 is the Proton acceptor of the active site. Catalysis depends on Asp132, which acts as the Proton donor.

This sequence belongs to the HisA/HisF family.

It localises to the cytoplasm. The catalysed reaction is 1-(5-phospho-beta-D-ribosyl)-5-[(5-phospho-beta-D-ribosylamino)methylideneamino]imidazole-4-carboxamide = 5-[(5-phospho-1-deoxy-D-ribulos-1-ylimino)methylamino]-1-(5-phospho-beta-D-ribosyl)imidazole-4-carboxamide. It functions in the pathway amino-acid biosynthesis; L-histidine biosynthesis; L-histidine from 5-phospho-alpha-D-ribose 1-diphosphate: step 4/9. The protein is 1-(5-phosphoribosyl)-5-[(5-phosphoribosylamino)methylideneamino] imidazole-4-carboxamide isomerase of Xanthomonas campestris pv. campestris (strain 8004).